The following is a 103-amino-acid chain: Large ribosomal subunit protein bL21 (103 aa).

This sequence belongs to the bacterial ribosomal protein bL21 family. Part of the 50S ribosomal subunit. Contacts protein L20.

Functionally, this protein binds to 23S rRNA in the presence of protein L20. The polypeptide is Large ribosomal subunit protein bL21 (Pseudomonas syringae pv. tomato (strain ATCC BAA-871 / DC3000)).